The primary structure comprises 200 residues: UPF0316 protein SACOL1973 (200 aa).

3 helical membrane-spanning segments follow: residues proline 8 to methionine 28, isoleucine 40 to methionine 60, and isoleucine 66 to isoleucine 86.

The protein belongs to the UPF0316 family.

The protein resides in the cell membrane. This is UPF0316 protein SACOL1973 from Staphylococcus aureus (strain COL).